Reading from the N-terminus, the 378-residue chain is Squalene methyltransferase 1 (378 aa).

The chain crosses the membrane as a helical span at residues 17–37 (LLTWKGVAGLVVAITLGYLII).

It belongs to the class I-like SAM-binding methyltransferase superfamily. Erg6/SMT family.

It localises to the microsome membrane. The catalysed reaction is squalene + 2 S-adenosyl-L-methionine = 3,22-dimethyl-1,2,23,24-tetradehydro-2,3,22,23-tetrahydrosqualene + 2 S-adenosyl-L-homocysteine + 2 H(+). In terms of biological role, converts squalene to mono- and dimethyl derivatives, but not to tri- and tetramethylated products. Unable to methylate cycloartenol, zymosterol or lanosterol. Methylates both C-3 and C22 positions, but only C-3 position in monomethylated products. Produces mainly dimethylated squalene. This chain is Squalene methyltransferase 1 (TMT-1), found in Botryococcus braunii (Green alga).